Reading from the N-terminus, the 277-residue chain is Type II restriction enzyme EcoRI (277 aa).

Catalysis depends on residues D91, E111, and K113. Mg(2+) contacts are provided by D91 and E111.

The protein belongs to the EcoRI type II restriction endonuclease family. In terms of assembly, homodimer. The cofactor is Mg(2+).

It catalyses the reaction Endonucleolytic cleavage of DNA to give specific double-stranded fragments with terminal 5'-phosphates.. Functionally, a P subtype restriction enzyme that recognizes the double-stranded sequence 5'-GAATTC-3' and cleaves after G-1. In Escherichia coli, this protein is Type II restriction enzyme EcoRI (ecoRIR).